The sequence spans 525 residues: Glucose-6-phosphate isomerase (525 aa).

Catalysis depends on E347, which acts as the Proton donor. Residues H378 and K493 contribute to the active site.

It belongs to the GPI family.

Its subcellular location is the cytoplasm. It catalyses the reaction alpha-D-glucose 6-phosphate = beta-D-fructose 6-phosphate. It functions in the pathway carbohydrate biosynthesis; gluconeogenesis. Its pathway is carbohydrate degradation; glycolysis; D-glyceraldehyde 3-phosphate and glycerone phosphate from D-glucose: step 2/4. Catalyzes the reversible isomerization of glucose-6-phosphate to fructose-6-phosphate. This Chlamydia trachomatis serovar D (strain ATCC VR-885 / DSM 19411 / UW-3/Cx) protein is Glucose-6-phosphate isomerase.